A 292-amino-acid chain; its full sequence is Insulin-like growth factor-binding protein 3 (292 aa).

A signal peptide spans 1-27 (MHPARPALWAAALTALTLLRGPPVARA). The 84-residue stretch at 36–119 (PVVRCEPCDA…LNGRGFCANA (84 aa)) folds into the IGFBP N-terminal domain. 6 cysteine pairs are disulfide-bonded: Cys40–Cys69, Cys43–Cys71, Cys51–Cys72, Cys60–Cys75, Cys83–Cys96, and Cys90–Cys116. Asn118 and Asn137 each carry an N-linked (GlcNAc...) asparagine glycan. 2 disordered regions span residues 128 to 152 (YLPSQPAPGNISESEEEHNAGSVES) and 178 to 212 (KGHARDSQRYKVDYESQSTDTQNFSSESKRETEYG). Phosphoserine is present on Ser149. The span at 178-191 (KGHARDSQRYKVDY) shows a compositional bias: basic and acidic residues. A compositionally biased stretch (polar residues) spans 192–203 (ESQSTDTQNFSS). Asn200 is a glycosylation site (N-linked (GlcNAc...) asparagine). Ser202 carries the phosphoserine modification. A Thyroglobulin type-1 domain is found at 211–286 (YGPCRREMED…DTKGKDDVHC (76 aa)). 3 disulfide bridges follow: Cys214/Cys241, Cys252/Cys263, and Cys265/Cys286.

In terms of assembly, interacts with XLKD1. Binds IGF2 more than IGF1. Forms a ternary complex of about 140 to 150 kDa with IGF1 or IGF2 and a 85 kDa glycoprotein (ALS). Interacts with TMEM219. In terms of processing, phosphorylated by FAM20C in the extracellular medium.

The protein localises to the secreted. Functionally, IGF-binding proteins prolong the half-life of the IGFs and have been shown to either inhibit or stimulate the growth promoting effects of the IGFs on cell culture. They alter the interaction of IGFs with their cell surface receptors. Also exhibits IGF-independent antiproliferative and apoptotic effects mediated by its receptor TMEM219/IGFBP-3R. Promotes testicular germ cell apoptosis. The sequence is that of Insulin-like growth factor-binding protein 3 (Igfbp3) from Mus musculus (Mouse).